The sequence spans 246 residues: Dof zinc finger protein DOF4.7 (246 aa).

Composition is skewed to polar residues over residues 1–12 and 27–37; these read MMTSSHQSNTTG and QINNKEPSPAT. A disordered region spans residues 1–39; that stretch reads MMTSSHQSNTTGFKPRRIKTTAKPPRQINNKEPSPATQP. The Dof-type zinc finger occupies 41 to 95; the sequence is LKCPRCDSVNTKFCYYNNYSLSQPRHYCKNCRRYWTRGGALRNVPIGGSTRNKNK. C43, C46, C68, and C71 together coordinate Zn(2+). The disordered stretch occupies residues 216-235; it reads GGATSGNHEDNDDGEGNLGN.

Interacts with ZFP2. In terms of tissue distribution, highly expressed at the base of all organs of the flower, especially in the abscission zone (AZ) of petals, stamens and sepals. Expressed at low levels in sepals, filaments, stigmatic papillae, tips of young siliques, and at the base of pedicels and leaf trichomes.

It localises to the nucleus. Its function is as follows. Transcription factor that binds specifically to a 5'-AA[AG]G-3' consensus core sequence. Involved in the negative regulation of floral organ abscission by binding to the typical DOF 5'-AAAG-3' sequences in the promoter of ADPG2/PGAZAT, and by down-regulating its expression. ADPG2/PGAZAT is an abscission-related and cell wall hydrolyzing polygalacturonase. May act through the interaction with ZFP2, an abscission-related transcription factor. In Arabidopsis thaliana (Mouse-ear cress), this protein is Dof zinc finger protein DOF4.7.